The sequence spans 82 residues: MPSPEMESRLKKIVAEQLGVDESKIVPEARFTEDLNADSLDLVEMIMELEEAFGVEIPDEDAEKIMTVQDALNYIEQKLQAA.

A Carrier domain is found at 4–79 (PEMESRLKKI…DALNYIEQKL (76 aa)). The residue at position 39 (Ser-39) is an O-(pantetheine 4'-phosphoryl)serine.

This sequence belongs to the acyl carrier protein (ACP) family. Post-translationally, 4'-phosphopantetheine is transferred from CoA to a specific serine of apo-ACP by AcpS. This modification is essential for activity because fatty acids are bound in thioester linkage to the sulfhydryl of the prosthetic group.

The protein localises to the cytoplasm. It functions in the pathway lipid metabolism; fatty acid biosynthesis. Functionally, carrier of the growing fatty acid chain in fatty acid biosynthesis. This Roseiflexus sp. (strain RS-1) protein is Acyl carrier protein.